The following is an 87-amino-acid chain: Small ribosomal subunit protein bS20 (87 aa).

The interval 1 to 26 (MANIKSAKKRAIQSEKRRKHNASRRS) is disordered.

It belongs to the bacterial ribosomal protein bS20 family.

In terms of biological role, binds directly to 16S ribosomal RNA. This Photorhabdus laumondii subsp. laumondii (strain DSM 15139 / CIP 105565 / TT01) (Photorhabdus luminescens subsp. laumondii) protein is Small ribosomal subunit protein bS20.